Here is a 99-residue protein sequence, read N- to C-terminus: MSGISSKGLEELKNNGWLILEDGKKIKKEFKFKDFKQSIDFLKDIQPSADALDHHPDVCIYYNRVIVELTTHDMGGLTDLDYKLAIKIDELYKMKTSNL.

It belongs to the pterin-4-alpha-carbinolamine dehydratase family.

The catalysed reaction is (4aS,6R)-4a-hydroxy-L-erythro-5,6,7,8-tetrahydrobiopterin = (6R)-L-erythro-6,7-dihydrobiopterin + H2O. The polypeptide is Putative pterin-4-alpha-carbinolamine dehydratase (Saccharolobus islandicus (strain M.16.27) (Sulfolobus islandicus)).